The sequence spans 173 residues: Photosystem I reaction center subunit XI (173 aa).

A run of 2 helical transmembrane segments spans residues 92-112 (LAGL…LSLY) and 148-168 (LIGG…LGII).

Belongs to the PsaL family.

It localises to the cellular thylakoid membrane. The polypeptide is Photosystem I reaction center subunit XI (Nostoc punctiforme (strain ATCC 29133 / PCC 73102)).